We begin with the raw amino-acid sequence, 224 residues long: Non-structural protein V (224 aa).

Residues 54–65 (QKNIQHPTASHQ) are compositionally biased toward polar residues. 2 disordered regions span residues 54–96 (QKNI…DPEP) and 150–171 (TEFK…GGHR). The Zn(2+) site is built by His-170, Cys-189, Cys-193, Cys-205, Cys-207, Cys-210, Cys-214, and Cys-217.

The protein belongs to the paramyxoviruses V protein family. In terms of assembly, interacts with host IFIH1/MDA5 and DHX58/LGP2. Forms with host DDB1, CUL4A, STAT1, STAT2 and STAT3 the mumps virus V-dependent complex (VDC).

It localises to the virion. The protein localises to the host cytoplasm. Its function is as follows. Plays an essential role in the inhibition of host immune response. Prevents the establishment of cellular antiviral state by blocking interferon-alpha/beta (IFN-alpha/beta) production and signaling pathway. Interacts with host IFIH1/MDA5 and DHX58/LGP2 to inhibit the transduction pathway involved in the activation of IFN-beta promoter, thus protecting the virus against cell antiviral state. Blocks the type I and II interferon signaling pathways by interacting with host STAT1, STAT2 and STAT3, and mediating their ubiquitination and subsequent proteasomal degradation. This Mumps virus (strain SBL) (MuV) protein is Non-structural protein V.